Consider the following 93-residue polypeptide: Class II hydrophobin 1 (93 aa).

The N-terminal stretch at 1-16 is a signal peptide; the sequence is MKFFAVAALFVASAMA. Disulfide bonds link Cys-24/Cys-74, Cys-35/Cys-65, Cys-36/Cys-48, and Cys-75/Cys-86.

The protein belongs to the cerato-ulmin hydrophobin family. Interacts with maize ubiquilin 1-like (UBL) protein. Homotetramer. Further self-assembles to form highly ordered films at water-air interfaces through intermolecular interactions.

Its subcellular location is the cell membrane. Its function is as follows. Aerial growth, conidiation, and dispersal of filamentous fungi in the environment rely upon a capability of their secreting small amphipathic proteins called hydrophobins (HPBs) with low sequence identity. Class I can self-assemble into an outermost layer of rodlet bundles on aerial cell surfaces, conferring cellular hydrophobicity that supports fungal growth, development and dispersal; whereas Class II form highly ordered films at water-air interfaces through intermolecular interactions but contribute nothing to the rodlet structure. Hyd1 is a class II hydrophobin that acts as an elicitor of induced systemic resistance (ISR) in plants. During interaction with the plant, binds with the maize target protein UBL in order to recruit more UBL proteins in maize roots to elicit plant defense responses, including cell death as well as brassinosteroid, jasmonate (JA) and ethylene (ET) signaling. This is Class II hydrophobin 1 from Trichoderma harzianum (Hypocrea lixii).